The primary structure comprises 585 residues: Formate--tetrahydrofolate ligase (585 aa).

65–72 (TPHGEGKT) contacts ATP.

It belongs to the formate--tetrahydrofolate ligase family.

The enzyme catalyses (6S)-5,6,7,8-tetrahydrofolate + formate + ATP = (6R)-10-formyltetrahydrofolate + ADP + phosphate. The protein operates within one-carbon metabolism; tetrahydrofolate interconversion. The chain is Formate--tetrahydrofolate ligase from Shewanella baltica (strain OS155 / ATCC BAA-1091).